We begin with the raw amino-acid sequence, 83 residues long: SPbeta prophage-derived uncharacterized protein YopE (83 aa).

The next 2 helical transmembrane spans lie at 5 to 25 (AYFLIIWLGVGLLTGIKFIFV) and 60 to 80 (VIAFFMLIGLLPLAMRITKLF).

The protein resides in the cell membrane. In Bacillus subtilis (strain 168), this protein is SPbeta prophage-derived uncharacterized protein YopE (yopE).